The following is a 219-amino-acid chain: Glutathione S-transferase (219 aa).

A GST N-terminal domain is found at 2 to 89 (SQPILGYWDI…YLGRKYKLNG (88 aa)). Glutathione contacts are provided by residues 8 to 9 (YW), 44 to 47 (RSEW), Lys-51, 60 to 61 (NL), and 73 to 74 (QT). A GST C-terminal domain is found at 91–207 (NDHEEIRISM…YIKKQQPKTF (117 aa)). Tyr-117 contacts substrate.

It belongs to the GST superfamily. Mu family. As to quaternary structure, homodimer.

It localises to the cytoplasm. It catalyses the reaction RX + glutathione = an S-substituted glutathione + a halide anion + H(+). The polypeptide is Glutathione S-transferase (Dermatophagoides pteronyssinus (European house dust mite)).